We begin with the raw amino-acid sequence, 819 residues long: MPTRVCCCCSALRPRYKRLVDNIFPEDPKDGLVKADMEKLTFYAVSAPEKLDRIGAYLAERLSRDVVRHRSGYVLIAMEALDQLLMACHSQSIKPFVESFLHMVAKLLESGEPKLQVLGTNSFVKFANIEEDTPSYHRRYDFFVSRFSAMCHSCHSDPEIRTEIRIAGIRGIQGVVRKTVNDELRATIWEPQHMDKIVPSLLFNMQKIEEVDSRLGPPSSPSAADKEENPAVLAESCFRELLGRATFGNMNNAVRPVFAHLDHHKLWDPNEFAVHCFKIIMYSIQAQYSHHVIQEILGHLDARRKDSPRVRAGIIQVLLEAVAIAAKGSIGPTVLEVFNTLLKHLRLSVELEANDSQKGSVGSVTVSSKDNDEKIVQNAVIQTIGFFGSNLPDYQRSEIMMFIMGKVPVFGTSTHTLDISQLGDLGTRRIQIMLLRSLLMVTSGYKAKTIVTALPGSFLDPLLSPSLMEDYELRQLVLEVMHNLMDRHDNRAKLRGIRIIPDVADLKIKREKICRQDTSFMKKNGQQLYRHIYLGCKEEDNVQKNYELLYTSLALITIELANEEVVIDLIRLAIALQDSAIINEDNLSMFHRCGIMALVAAYLNFVSQMIAVPAFCQHVSKVIETRTMEAPYFLPEHIFRDKCMLPKSLEKHDKNLYFLTNKIAESLGGSGYSVERLTVPYVPQVTDEDRLSRRKSIVDTVSIQVDILSNSVPSDDVVSNTEEITFEALKKAIDTNGMEEQEKEKRRLVIEKFQKAPFEEIAAQCESKANLLHDRLAQILELTIRPPPSPSGTLTVTSGHTQYQSVPVYEMKFPDLCVY.

S360, S363, S420, and S692 each carry phosphoserine.

The protein belongs to the EFR3 family. As to quaternary structure, component of a phosphatidylinositol 4-kinase (PI4K) complex, composed of PI4KA, EFR3 (EFR3A or EFR3B), TTC7 (TTC7A or TTC7B) and HYCC (HYCC1 or HYCC2). Palmitoylated at its N-terminus, anchoring the protein to the plasma membrane. As to expression, widely expressed. Expressed in neurons of the superior olivary complex of the auditory brainstem. Also expressed at lower levels in the cochlear nucleus, the lateral leminiscal nuclei and the inferior collicus.

It localises to the cell membrane. The protein resides in the cytoplasm. Its subcellular location is the cytosol. Component of a complex required to localize phosphatidylinositol 4-kinase (PI4K) to the plasma membrane. The complex acts as a regulator of phosphatidylinositol 4-phosphate (PtdIns(4)P) synthesis. In the complex, EFR3A probably acts as the membrane-anchoring component. Also involved in responsiveness to G-protein-coupled receptors; it is however unclear whether this role is direct or indirect. This chain is Protein EFR3 homolog A, found in Mus musculus (Mouse).